Consider the following 389-residue polypeptide: Mannuronan synthase (389 aa).

The region spanning 16 to 116 (QRQFARVKLP…EVAALRYLIT (101 aa)) is the PilZ domain.

This sequence belongs to the Alg44 family.

It is found in the periplasm. It catalyses the reaction [(1-&gt;4)-beta-D-mannuronosyl](n) + GDP-alpha-D-mannuronate = [(1-&gt;4)-beta-D-mannuronosyl](n+1) + GDP + H(+). Its pathway is glycan biosynthesis; alginate biosynthesis. Its function is as follows. Required for alginate biosynthesis. This chain is Mannuronan synthase (alg44), found in Pseudomonas aeruginosa (strain ATCC 15692 / DSM 22644 / CIP 104116 / JCM 14847 / LMG 12228 / 1C / PRS 101 / PAO1).